Here is a 1030-residue protein sequence, read N- to C-terminus: MSTQQALAQANEHALSQANDLIKVGSKLRALSVLRDLLSDRSQWHSSLEQIMSLYVSLCAEQLDYQSLRDGIHHFKVSIMSQKEFSIVPLENIFKEIITPIEQKVDELKEKIEKENQENPLVEQNEISLIDPQQTLLFSYMKYLFEAYKAMIEVLTRQNTKFEHTKFDHSKFDSTLLKISTQALNYCSKYQRKPDFMVLTELFRSSIEQLFKVPSLDTVNTHIEIRFHQLTVAISLGLYLIAYKSIEDINIMLFSLLVKPKPVVLATYYQKLAQVYWITNAHLLHAYALYKHYVYNKNYNMNFTQADSQLYSSVLLVAALSSPIQEVNQNQSLLQFDSQSQRAMGLASLLSLQSIPKRETFLVDVRKVTNEVYPELADLASIFEKKTSPLMFAKLLEPKIKFIEGHAQLSQYLKPFLRVVFTKIALQVSKVYEVIKIEEFIKLVPFYTKTQIELYLLESIKRKLIGARIDHKNGVIRFGHYDFDSAKISDQLSNLATGVGKALNMIEPEKKQQQHDKLKKEVYVKIINSLQDEHRRILARKEIIEKKKIYMEQQDRIKKQKEHEELQKKIQEKVARDQQRLKEDMERREKEQAEEESQQNQLDQTINAIDKAKVEMKAKIAKIAKQLYILERAYREEELPVVESLQKTKAVEDKQYFESTQAEFLKLHREVHDRNVTEKARLNRIVPEYQKFTQAVIEERKKQLPALQKEQEKRFQEFLIQQEQDVQERKAKREKARIAAAQEKARKEEQERERLEQEHLEQERLEEERKNAPYVPPSSRRTFRDDDDEREESGRWGGRRGGDDFGRSKADEGDRWGRREDAPPPRRDEGGDRWGRREDAPPPRRDEGGDRWGKREDAPPPRRDEGGWGRRDDAPPPRRDEGGDRWGRRDDAPPRRDDAPPPRRDDAPPPRRDEGGDRWGRRDDAPPRRDGGGSGGFGGRRDDAPPRRDEGGDRWGRREDAPPPRRDEGGDRWGRRDDAPPRRDGGGGSGFGRNQGAQGDQNDSWRSDNKKEENKKDADGWQTVGAKKRY.

Residues 94–126 (FKEIITPIEQKVDELKEKIEKENQENPLVEQNE) are a coiled coil. A PCI domain is found at 308-483 (SQLYSSVLLV…GVIRFGHYDF (176 aa)). Coiled coils occupy residues 527–620 (INSL…KAKI) and 720–772 (IQQE…RKNA). 5 stretches are compositionally biased toward basic and acidic residues: residues 576–591 (RDQQRLKEDMERREKE), 743–771 (EKARKEEQERERLEQEHLEQERLEEERKN), 800–931 (RGGD…RRDG), 939–985 (GRRD…RRDG), and 1003–1019 (DSWRSDNKKEENKKDAD). 2 disordered regions span residues 576-603 (RDQQRLKEDMERREKEQAEEESQQNQLD) and 737-1030 (RIAA…KKRY).

It belongs to the eIF-3 subunit A family. Component of the eukaryotic translation initiation factor 3 (eIF-3) complex.

The protein resides in the cytoplasm. Its function is as follows. RNA-binding component of the eukaryotic translation initiation factor 3 (eIF-3) complex, which is involved in protein synthesis of a specialized repertoire of mRNAs and, together with other initiation factors, stimulates binding of mRNA and methionyl-tRNAi to the 40S ribosome. The eIF-3 complex specifically targets and initiates translation of a subset of mRNAs involved in cell proliferation. This is Eukaryotic translation initiation factor 3 subunit A (eif3A) from Dictyostelium discoideum (Social amoeba).